We begin with the raw amino-acid sequence, 231 residues long: 5'-methylthioadenosine/S-adenosylhomocysteine nucleosidase (231 aa).

The Proton acceptor role is filled by Glu-12. Substrate is bound by residues Gly-78, Met-153, and 174-175; that span reads ME. Asp-198 (proton donor) is an active-site residue.

Belongs to the PNP/UDP phosphorylase family. MtnN subfamily.

It catalyses the reaction S-adenosyl-L-homocysteine + H2O = S-(5-deoxy-D-ribos-5-yl)-L-homocysteine + adenine. It carries out the reaction S-methyl-5'-thioadenosine + H2O = 5-(methylsulfanyl)-D-ribose + adenine. The catalysed reaction is 5'-deoxyadenosine + H2O = 5-deoxy-D-ribose + adenine. It participates in amino-acid biosynthesis; L-methionine biosynthesis via salvage pathway; S-methyl-5-thio-alpha-D-ribose 1-phosphate from S-methyl-5'-thioadenosine (hydrolase route): step 1/2. Functionally, catalyzes the irreversible cleavage of the glycosidic bond in both 5'-methylthioadenosine (MTA) and S-adenosylhomocysteine (SAH/AdoHcy) to adenine and the corresponding thioribose, 5'-methylthioribose and S-ribosylhomocysteine, respectively. Also cleaves 5'-deoxyadenosine, a toxic by-product of radical S-adenosylmethionine (SAM) enzymes, into 5-deoxyribose and adenine. This chain is 5'-methylthioadenosine/S-adenosylhomocysteine nucleosidase, found in Bacillus licheniformis (strain ATCC 14580 / DSM 13 / JCM 2505 / CCUG 7422 / NBRC 12200 / NCIMB 9375 / NCTC 10341 / NRRL NRS-1264 / Gibson 46).